The sequence spans 236 residues: MRQHVNPLSRFFQLPRPLPSPEEMFAQSSRPLHLDIGCARGGFLLSLAPLQPEWNHVGVEIRHPLVLSAERDRQELELDNLRFLFCNVNVSLEEWLDALPRDQLQWVSIQFPDPWFKRRHQKRRVLQPSLLIALATALQPGRELFIQSDVLSVIEPMVMLIEQSNCFERPKNDSHAWQKANPLPVPTERERYVLDQGLQVYRRLYQRNDQQAPELSNLEALWQQVDNPSKEEHSDC.

S-adenosyl-L-methionine is bound by residues Asp35, Glu60, Asn87, and Asp113. Residue Asp113 is part of the active site. The substrate site is built by Lys117 and Asp149.

The protein belongs to the class I-like SAM-binding methyltransferase superfamily. TrmB family.

The catalysed reaction is guanosine(46) in tRNA + S-adenosyl-L-methionine = N(7)-methylguanosine(46) in tRNA + S-adenosyl-L-homocysteine. It functions in the pathway tRNA modification; N(7)-methylguanine-tRNA biosynthesis. Functionally, catalyzes the formation of N(7)-methylguanine at position 46 (m7G46) in tRNA. The protein is tRNA (guanine-N(7)-)-methyltransferase of Prochlorococcus marinus (strain MIT 9313).